The primary structure comprises 243 residues: Cyclin-dependent kinase 20 (243 aa).

One can recognise a Protein kinase domain in the interval 4 to 243 (YCILGRIGEG…IHLSCRFLSV (240 aa)). ATP contacts are provided by residues 10-18 (IGEGAHGIV) and Lys-33. Asp-127 serves as the catalytic Proton acceptor.

The protein belongs to the protein kinase superfamily. CMGC Ser/Thr protein kinase family. CDC2/CDKX subfamily. As to quaternary structure, monomer. Interacts with TBC1D32 and MAK.

It is found in the nucleus. The protein resides in the cytoplasm. It localises to the cell projection. The protein localises to the cilium. The enzyme catalyses L-seryl-[protein] + ATP = O-phospho-L-seryl-[protein] + ADP + H(+). It carries out the reaction L-threonyl-[protein] + ATP = O-phospho-L-threonyl-[protein] + ADP + H(+). Functionally, required for high-level Shh responses in the developing neural tube. Together with TBC1D32, controls the structure of the primary cilium by coordinating assembly of the ciliary membrane and axoneme, allowing GLI2 to be properly activated in response to SHH signaling. Involved in cell growth. Activates CDK2, a kinase involved in the control of the cell cycle, by phosphorylating residue 'Thr-160'. This Macaca mulatta (Rhesus macaque) protein is Cyclin-dependent kinase 20 (CDK20).